The primary structure comprises 162 residues: ATP synthase subunit b (162 aa).

The chain crosses the membrane as a helical span at residues 4–24; sequence INWGSIIYQLIAFCVLLWLLS.

This sequence belongs to the ATPase B chain family. In terms of assembly, F-type ATPases have 2 components, F(1) - the catalytic core - and F(0) - the membrane proton channel. F(1) has five subunits: alpha(3), beta(3), gamma(1), delta(1), epsilon(1). F(0) has three main subunits: a(1), b(2) and c(10-14). The alpha and beta chains form an alternating ring which encloses part of the gamma chain. F(1) is attached to F(0) by a central stalk formed by the gamma and epsilon chains, while a peripheral stalk is formed by the delta and b chains.

The protein resides in the cell membrane. Its function is as follows. F(1)F(0) ATP synthase produces ATP from ADP in the presence of a proton or sodium gradient. F-type ATPases consist of two structural domains, F(1) containing the extramembraneous catalytic core and F(0) containing the membrane proton channel, linked together by a central stalk and a peripheral stalk. During catalysis, ATP synthesis in the catalytic domain of F(1) is coupled via a rotary mechanism of the central stalk subunits to proton translocation. In terms of biological role, component of the F(0) channel, it forms part of the peripheral stalk, linking F(1) to F(0). The sequence is that of ATP synthase subunit b from Halalkalibacterium halodurans (strain ATCC BAA-125 / DSM 18197 / FERM 7344 / JCM 9153 / C-125) (Bacillus halodurans).